Reading from the N-terminus, the 202-residue chain is Mitochondrial import receptor subunit TOM20-3 (202 aa).

An N-acetylmethionine modification is found at M1. At 1-174 the chain is on the cytoplasmic side; sequence MDTETEFDRI…NKKSSDAKYD (174 aa). TPR repeat units lie at residues 38 to 74 and 86 to 119; these read GGVL…DPKK and TSFA…QPDN. Residues 146-166 are disordered; that stretch reads SQPMGRVEAPAPPSSKAVKNK. The helical transmembrane segment at 175–192 threads the bilayer; the sequence is AMGWVILAIGVVAWISFA. Over 193-202 the chain is Mitochondrial intermembrane; sequence KANVPVSPPR.

It belongs to the Tom20 family. As to quaternary structure, forms part of the preprotein translocase complex of the outer mitochondrial membrane (TOM complex) which consists of at least 6 different proteins (TOM5, TOM6, TOM7, TOM20, TOM22/TOM9 and TOM40). Component of a mitochondrial large protein complex that contains, at least, MIC60, DGS1, TOM40, TOM20 proteins, and petC/RISP. Post-translationally, the N-terminus is blocked. As to expression, expressed in roots, flowers, young cotyledons and leaves.

It is found in the mitochondrion outer membrane. Central component of the receptor complex responsible for the recognition and translocation of cytosolically synthesized mitochondrial preproteins. Together with TOM22 functions as the transit peptide receptor at the surface of the mitochondrion outer membrane and facilitates the movement of preproteins into the translocation pore. The protein is Mitochondrial import receptor subunit TOM20-3 of Arabidopsis thaliana (Mouse-ear cress).